The chain runs to 157 residues: 6,7-dimethyl-8-ribityllumazine synthase (157 aa).

5-amino-6-(D-ribitylamino)uracil is bound by residues phenylalanine 24, 56 to 58 (SFE), and 79 to 81 (VLI). Residue 84–85 (ET) participates in (2S)-2-hydroxy-3-oxobutyl phosphate binding. Histidine 87 acts as the Proton donor in catalysis. Phenylalanine 112 is a 5-amino-6-(D-ribitylamino)uracil binding site. Position 126 (arginine 126) interacts with (2S)-2-hydroxy-3-oxobutyl phosphate.

The protein belongs to the DMRL synthase family.

It catalyses the reaction (2S)-2-hydroxy-3-oxobutyl phosphate + 5-amino-6-(D-ribitylamino)uracil = 6,7-dimethyl-8-(1-D-ribityl)lumazine + phosphate + 2 H2O + H(+). It functions in the pathway cofactor biosynthesis; riboflavin biosynthesis; riboflavin from 2-hydroxy-3-oxobutyl phosphate and 5-amino-6-(D-ribitylamino)uracil: step 1/2. Functionally, catalyzes the formation of 6,7-dimethyl-8-ribityllumazine by condensation of 5-amino-6-(D-ribitylamino)uracil with 3,4-dihydroxy-2-butanone 4-phosphate. This is the penultimate step in the biosynthesis of riboflavin. In Pyrococcus furiosus (strain ATCC 43587 / DSM 3638 / JCM 8422 / Vc1), this protein is 6,7-dimethyl-8-ribityllumazine synthase.